A 417-amino-acid polypeptide reads, in one-letter code: MAVCARGLRCLGTPAVSLRLAASRSYATTTPPDPAIPNTPGAAATSSPAKRPRTSFQDKLNAGPSFSDFLSDKDDARILDPAEAYALKTALVGPKGKKKEYTRLPPWLKTSIPDSNNYKRIKNDLRGLNLHTVCEEARCPNISECWGGGSKSAATATIMLMGDTCTRGCRFCSVKTSKAPPPLDPHEPENTAEALSRWGLGYVVMTSVDRDDLPDGGARHWAETVMKIKQKAPNILVECLTGDFDGNLEMVALVAKSGLDVYAHNVETVEALTPQVRDRRAGFQKSIRVLKAAKAAQPSLITKTSMMLGLGETEEQMWDALRQLRAADIDVVTFGQYMRPTKRHMPVHEYVRPDVFEFWKEKALEMGFLYCASGPLVRSSYKAGEAFIENVLKKRRAESTGPGSASVQDVATGDLVR.

The N-terminal 26 residues, 1 to 26 (MAVCARGLRCLGTPAVSLRLAASRSY), are a transit peptide targeting the mitochondrion. Residues 27-61 (ATTTPPDPAIPNTPGAAATSSPAKRPRTSFQDKLN) form a disordered region. A compositionally biased stretch (polar residues) spans 44 to 58 (ATSSPAKRPRTSFQD). The [4Fe-4S] cluster site is built by C134, C139, C145, C165, C169, C172, and S380. The region spanning 148 to 369 (GGSKSAATAT…KEKALEMGFL (222 aa)) is the Radical SAM core domain. Residues 398–417 (ESTGPGSASVQDVATGDLVR) form a disordered region.

It belongs to the radical SAM superfamily. Lipoyl synthase family. Requires [4Fe-4S] cluster as cofactor.

Its subcellular location is the mitochondrion. It catalyses the reaction [[Fe-S] cluster scaffold protein carrying a second [4Fe-4S](2+) cluster] + N(6)-octanoyl-L-lysyl-[protein] + 2 oxidized [2Fe-2S]-[ferredoxin] + 2 S-adenosyl-L-methionine + 4 H(+) = [[Fe-S] cluster scaffold protein] + N(6)-[(R)-dihydrolipoyl]-L-lysyl-[protein] + 4 Fe(3+) + 2 hydrogen sulfide + 2 5'-deoxyadenosine + 2 L-methionine + 2 reduced [2Fe-2S]-[ferredoxin]. The protein operates within protein modification; protein lipoylation via endogenous pathway; protein N(6)-(lipoyl)lysine from octanoyl-[acyl-carrier-protein]: step 2/2. In terms of biological role, catalyzes the radical-mediated insertion of two sulfur atoms into the C-6 and C-8 positions of the octanoyl moiety bound to the lipoyl domains of lipoate-dependent enzymes, thereby converting the octanoylated domains into lipoylated derivatives. The protein is Lipoyl synthase, mitochondrial of Uncinocarpus reesii (strain UAMH 1704).